The primary structure comprises 72 residues: Protein RALF-like 36 (72 aa).

The N-terminal stretch at methionine 1–alanine 27 is a signal peptide. 2 disulfide bridges follow: cysteine 43-cysteine 51 and cysteine 63-cysteine 69.

It belongs to the plant rapid alkalinization factor (RALF) family.

It localises to the secreted. Functionally, cell signaling peptide that may regulate plant stress, growth, and development. Mediates a rapid alkalinization of extracellular space by mediating a transient increase in the cytoplasmic Ca(2+) concentration leading to a calcium-dependent signaling events through a cell surface receptor and a concomitant activation of some intracellular mitogen-activated protein kinases. The chain is Protein RALF-like 36 from Arabidopsis thaliana (Mouse-ear cress).